A 361-amino-acid chain; its full sequence is Phospho-N-acetylmuramoyl-pentapeptide-transferase (361 aa).

10 consecutive transmembrane segments (helical) span residues 28 to 48 (LAIIITLSLSFVTGPILIKFL), 74 to 94 (TMGGIMIILSSCLATLLLADL), 99 to 119 (IWITLFGFISFGIIGFMDDYA), 133 to 153 (SKLLLQGIISLIICILLEYTD), 168 to 188 (LSLDLGYFYIVFAIFVIVGSS), 203 to 223 (VPIAFTAGSFALISYLVGNLI), 236 to 256 (TGELTVLCAGLVGSCLGFLWF), 263 to 283 (VFMGDTGSLSLGSILGIISVI), 288 to 308 (VVLSIVGGLFVVETTSVILQV), and 338 to 358 (KVVIRFWIISVIFALIGLSSL).

The protein belongs to the glycosyltransferase 4 family. MraY subfamily. Mg(2+) is required as a cofactor.

It is found in the cell inner membrane. It catalyses the reaction UDP-N-acetyl-alpha-D-muramoyl-L-alanyl-gamma-D-glutamyl-meso-2,6-diaminopimeloyl-D-alanyl-D-alanine + di-trans,octa-cis-undecaprenyl phosphate = di-trans,octa-cis-undecaprenyl diphospho-N-acetyl-alpha-D-muramoyl-L-alanyl-D-glutamyl-meso-2,6-diaminopimeloyl-D-alanyl-D-alanine + UMP. Its pathway is cell wall biogenesis; peptidoglycan biosynthesis. Functionally, catalyzes the initial step of the lipid cycle reactions in the biosynthesis of the cell wall peptidoglycan: transfers peptidoglycan precursor phospho-MurNAc-pentapeptide from UDP-MurNAc-pentapeptide onto the lipid carrier undecaprenyl phosphate, yielding undecaprenyl-pyrophosphoryl-MurNAc-pentapeptide, known as lipid I. The chain is Phospho-N-acetylmuramoyl-pentapeptide-transferase from Rickettsia canadensis (strain McKiel).